The sequence spans 231 residues: NADH-quinone oxidoreductase subunit C (231 aa).

The protein belongs to the complex I 30 kDa subunit family. NDH-1 is composed of 14 different subunits. Subunits NuoB, C, D, E, F, and G constitute the peripheral sector of the complex.

It localises to the cell membrane. It carries out the reaction a quinone + NADH + 5 H(+)(in) = a quinol + NAD(+) + 4 H(+)(out). Functionally, NDH-1 shuttles electrons from NADH, via FMN and iron-sulfur (Fe-S) centers, to quinones in the respiratory chain. The immediate electron acceptor for the enzyme in this species is believed to be a menaquinone. Couples the redox reaction to proton translocation (for every two electrons transferred, four hydrogen ions are translocated across the cytoplasmic membrane), and thus conserves the redox energy in a proton gradient. This is NADH-quinone oxidoreductase subunit C from Mycobacterium sp. (strain JLS).